Here is a 126-residue protein sequence, read N- to C-terminus: Protein LiaI (126 aa).

2 consecutive transmembrane segments (helical) span residues phenylalanine 11 to isoleucine 31 and isoleucine 56 to isoleucine 76.

Its subcellular location is the cell membrane. This chain is Protein LiaI (liaI), found in Bacillus subtilis (strain 168).